A 465-amino-acid chain; its full sequence is Histidine--tRNA ligase (465 aa).

It belongs to the class-II aminoacyl-tRNA synthetase family. Homodimer.

Its subcellular location is the cytoplasm. It catalyses the reaction tRNA(His) + L-histidine + ATP = L-histidyl-tRNA(His) + AMP + diphosphate + H(+). The chain is Histidine--tRNA ligase (hisS) from Pelagibacter ubique (strain HTCC1062).